Consider the following 1857-residue polypeptide: Fatty acid synthase subunit alpha (1857 aa).

Residues 96–132 are disordered; sequence EEEPEATEPAPSATPAAPAAAPAAGAPPPPPSAGPAA. Residues 102–119 are compositionally biased toward low complexity; the sequence is TEPAPSATPAAPAAAPAA. Residues 139–214 form the Carrier domain; that stretch reads VTAVDILRTL…ASMQATFNGQ (76 aa). Position 174 is an O-(pantetheine 4'-phosphoryl)serine (S174). Positions 577–604 are disordered; the sequence is QIIPQENGHSKKGGRSAAKRNTPTRPGK. The segment at 648–845 is beta-ketoacyl reductase; it reads KNVLMTGAGA…GAVIGWTRGT (198 aa). Positions 1092 to 1633 constitute a Ketosynthase family 3 (KS3) domain; the sequence is LQEIVIQEDL…QKGAQVIGIH (542 aa). Active-site for beta-ketoacyl synthase activity residues include C1275, H1518, and H1559. D1743, V1744, and E1745 together coordinate Mg(2+). Acetyl-CoA-binding positions include 1743–1745, Y1769, S1779, 1788–1798, 1812–1815, and 1842–1844; these read DVE, EAVFKSLGVSS, VDAN, and ISH. S1843 and H1844 together coordinate Mg(2+).

Belongs to the thiolase-like superfamily. Fungal fatty acid synthetase subunit alpha family. As to quaternary structure, [Alpha(6)beta(6)] hexamers of two multifunctional subunits (alpha and beta).

The enzyme catalyses acetyl-CoA + n malonyl-CoA + 2n NADPH + 4n H(+) = a long-chain-acyl-CoA + n CoA + n CO2 + 2n NADP(+).. The catalysed reaction is a fatty acyl-[ACP] + malonyl-[ACP] + H(+) = a 3-oxoacyl-[ACP] + holo-[ACP] + CO2. It carries out the reaction a (3R)-hydroxyacyl-[ACP] + NADP(+) = a 3-oxoacyl-[ACP] + NADPH + H(+). Fatty acid synthetase catalyzes the formation of long-chain fatty acids from acetyl-CoA, malonyl-CoA and NADPH. The alpha subunit contains domains for: acyl carrier protein, 3-oxoacyl-[acyl-carrier-protein] reductase, and 3-oxoacyl-[acyl-carrier-protein] synthase. The polypeptide is Fatty acid synthase subunit alpha (FAS2) (Penicillium patulum (Penicillium griseofulvum)).